The primary structure comprises 195 residues: MTPTLLSAFWTYTLITAMTPGPNNILALSSATSHGFRQSTRVLAGMSLGFLIVMLLCAGISFSLAVIDPAAVHLLSWAGAAYIVWLAWKIATSPTKEDGLQTKPISFWASFALQFVNVKIILYGVTALSTFVLPQTQALSWVVGVSVLLAMIGTFGNVCWALAGHLFQRLFRQYGRQLNIVLALLLVYCAVRIFY.

The Periplasmic segment spans residues 1 to 7; that stretch reads MTPTLLS. The helical transmembrane segment at 8–28 threads the bilayer; the sequence is AFWTYTLITAMTPGPNNILAL. Over 29 to 46 the chain is Cytoplasmic; the sequence is SSATSHGFRQSTRVLAGM. A helical transmembrane segment spans residues 47 to 67; it reads SLGFLIVMLLCAGISFSLAVI. Over 68–69 the chain is Periplasmic; the sequence is DP. A helical transmembrane segment spans residues 70-90; that stretch reads AAVHLLSWAGAAYIVWLAWKI. Over 91-104 the chain is Cytoplasmic; the sequence is ATSPTKEDGLQTKP. Residues 105-125 traverse the membrane as a helical segment; that stretch reads ISFWASFALQFVNVKIILYGV. Residues 126-141 are Periplasmic-facing; it reads TALSTFVLPQTQALSW. A helical transmembrane segment spans residues 142 to 162; the sequence is VVGVSVLLAMIGTFGNVCWAL. At 163-176 the chain is on the cytoplasmic side; sequence AGHLFQRLFRQYGR. A helical membrane pass occupies residues 177–194; sequence QLNIVLALLLVYCAVRIF. A topological domain (periplasmic) is located at residue tyrosine 195.

This sequence belongs to the Rht family.

It localises to the cell inner membrane. The enzyme catalyses O-acetyl-L-serine(in) = O-acetyl-L-serine(out). It carries out the reaction L-cysteine(in) = L-cysteine(out). In terms of biological role, exporter of O-acetylserine (OAS) and cysteine. The protein is Cysteine/O-acetylserine efflux protein (eamB) of Escherichia coli O1:K1 / APEC.